The primary structure comprises 169 residues: 6,7-dimethyl-8-ribityllumazine synthase (169 aa).

Residues phenylalanine 24, 58-60 (ALE), and 82-84 (AVI) contribute to the 5-amino-6-(D-ribitylamino)uracil site. Residue 87–88 (ET) coordinates (2S)-2-hydroxy-3-oxobutyl phosphate. Catalysis depends on histidine 90, which acts as the Proton donor. Asparagine 115 is a binding site for 5-amino-6-(D-ribitylamino)uracil. Position 129 (arginine 129) interacts with (2S)-2-hydroxy-3-oxobutyl phosphate.

The protein belongs to the DMRL synthase family.

It carries out the reaction (2S)-2-hydroxy-3-oxobutyl phosphate + 5-amino-6-(D-ribitylamino)uracil = 6,7-dimethyl-8-(1-D-ribityl)lumazine + phosphate + 2 H2O + H(+). It participates in cofactor biosynthesis; riboflavin biosynthesis; riboflavin from 2-hydroxy-3-oxobutyl phosphate and 5-amino-6-(D-ribitylamino)uracil: step 1/2. Catalyzes the formation of 6,7-dimethyl-8-ribityllumazine by condensation of 5-amino-6-(D-ribitylamino)uracil with 3,4-dihydroxy-2-butanone 4-phosphate. This is the penultimate step in the biosynthesis of riboflavin. This is 6,7-dimethyl-8-ribityllumazine synthase from Burkholderia vietnamiensis (strain G4 / LMG 22486) (Burkholderia cepacia (strain R1808)).